The sequence spans 496 residues: Probable cytosol aminopeptidase (496 aa).

2 residues coordinate Mn(2+): Lys261 and Asp266. Residue Lys273 is part of the active site. Positions 284, 343, and 345 each coordinate Mn(2+). The active site involves Arg347.

It belongs to the peptidase M17 family. Requires Mn(2+) as cofactor.

The protein localises to the cytoplasm. The enzyme catalyses Release of an N-terminal amino acid, Xaa-|-Yaa-, in which Xaa is preferably Leu, but may be other amino acids including Pro although not Arg or Lys, and Yaa may be Pro. Amino acid amides and methyl esters are also readily hydrolyzed, but rates on arylamides are exceedingly low.. It catalyses the reaction Release of an N-terminal amino acid, preferentially leucine, but not glutamic or aspartic acids.. In terms of biological role, presumably involved in the processing and regular turnover of intracellular proteins. Catalyzes the removal of unsubstituted N-terminal amino acids from various peptides. The chain is Probable cytosol aminopeptidase from Bacillus licheniformis (strain ATCC 14580 / DSM 13 / JCM 2505 / CCUG 7422 / NBRC 12200 / NCIMB 9375 / NCTC 10341 / NRRL NRS-1264 / Gibson 46).